The following is a 321-amino-acid chain: NADPH-dependent codeinone reductase 1-4 (321 aa).

NADPH is bound by residues threonine 27 and aspartate 51. Residues tyrosine 56 and histidine 119 each act as proton donor in the active site. A substrate-binding site is contributed by histidine 119. Serine 165, glutamine 187, serine 214, leucine 216, serine 264, and arginine 269 together coordinate NADPH. Residues 299–321 are disordered; that stretch reads SADFLLSPTGPFKTEEEFWDEKD.

It belongs to the aldo/keto reductase family. As to expression, latex secreting cells (laticifer cells). Expressed constitutively in all organs with highest levels in capsules. Restricted to the parietal region of sieve elements adjacent or proximal to laticifers in roots, stems, leaves and carpels.

The protein localises to the cytoplasm. Its subcellular location is the cytosol. It carries out the reaction codeine + NADP(+) = codeinone + NADPH + H(+). It catalyses the reaction neopine + NADP(+) = neopinone + NADPH + H(+). The enzyme catalyses morphine + NADP(+) = morphinone + NADPH + H(+). The catalysed reaction is neomorphine + NADP(+) = neomorphinone + NADPH + H(+). It participates in alkaloid biosynthesis; morphine biosynthesis. Its function is as follows. NADPH-dependent codeinone reductase involved in biosynthesis of morphinan-type benzylisoquinoline and opiate alkaloids natural products. Reduces codeinone to codeine in the penultimate step in morphine biosynthesis. Can use morphinone, hydrocodone and hydromorphone as substrate during reductive reaction with NADPH as cofactor, and morphine and dihydrocodeine as substrate during oxidative reaction with NADP as cofactor. Converts morphinone to morphine, and neomorphinone to neomorphine. Reduces irreversibly neopinone, a spontaneous isomer of codeinone, to neopine; in planta, neopine levels are limited to low levels. The protein is NADPH-dependent codeinone reductase 1-4 of Papaver somniferum (Opium poppy).